The primary structure comprises 363 residues: Biotin synthase (363 aa).

Ser-13, Ser-14, and Ser-17 each carry phosphoserine. Residues 54–276 enclose the Radical SAM core domain; it reads KKVQQCTLLS…IATARICMPK (223 aa). Cys-69, Cys-73, and Cys-76 together coordinate [4Fe-4S] cluster. [2Fe-2S] cluster-binding residues include Cys-113, Cys-146, Cys-206, and Arg-280. The tract at residues 337 to 363 is disordered; the sequence is EYGTSTEGEDGTFTLPPKERLAPSPSL.

The protein belongs to the radical SAM superfamily. Biotin synthase family. The cofactor is [4Fe-4S] cluster. [2Fe-2S] cluster serves as cofactor.

The enzyme catalyses (4R,5S)-dethiobiotin + (sulfur carrier)-SH + 2 reduced [2Fe-2S]-[ferredoxin] + 2 S-adenosyl-L-methionine = (sulfur carrier)-H + biotin + 2 5'-deoxyadenosine + 2 L-methionine + 2 oxidized [2Fe-2S]-[ferredoxin]. It functions in the pathway cofactor biosynthesis; biotin biosynthesis; biotin from 7,8-diaminononanoate: step 2/2. Catalyzes the last step of biotin biosynthesis, the conversion of dethiobiotin to biotin. In Schizosaccharomyces pombe (strain 972 / ATCC 24843) (Fission yeast), this protein is Biotin synthase (bio2).